We begin with the raw amino-acid sequence, 379 residues long: Putative nucleosome assembly protein C2D10.11C (379 aa).

Over residues 1 to 10 (MSKGPGDFKK) the composition is skewed to basic and acidic residues. Disordered regions lie at residues 1-30 (MSKGPGDFKKSWNGFAAQTPQNTPSSDVHL) and 345-379 (SDFNQMDEEDSEDAYTDEEDLSSDDEEILSSEISD). Over residues 16–28 (AAQTPQNTPSSDV) the composition is skewed to polar residues.

This sequence belongs to the nucleosome assembly protein (NAP) family.

Its subcellular location is the nucleus. This Schizosaccharomyces pombe (strain 972 / ATCC 24843) (Fission yeast) protein is Putative nucleosome assembly protein C2D10.11C.